We begin with the raw amino-acid sequence, 326 residues long: 3-dehydrosphinganine reductase TSC10A (326 aa).

The Lumenal portion of the chain corresponds to Met1–Leu7. Residues Phe8–Val28 form a helical membrane-spanning segment. Residues Arg29–Asn264 are Cytoplasmic-facing. NADPH is bound by residues Gly46, Ser48, Ser49, Gly50, Arg71, Lys75, and Asp97. The GXSXG motif lies at Gly46–Gly50. Ser174 functions as the Proton donor in the catalytic mechanism. Tyr188 acts as the Proton acceptor in catalysis. Positions 188 and 192 each coordinate NADP(+). The active-site Lowers pKa of active site Tyr is the Lys192. The chain crosses the membrane as a helical span at residues Phe265–Pro285. Over Gln286–Ser288 the chain is Lumenal. A helical membrane pass occupies residues Phe289–Phe309. At Gln310–Lys326 the chain is on the cytoplasmic side.

This sequence belongs to the short-chain dehydrogenases/reductases (SDR) family. As to expression, expressed in roots, leaves, stems, flowers and siliques.

It localises to the endoplasmic reticulum membrane. The catalysed reaction is sphinganine + NADP(+) = 3-oxosphinganine + NADPH + H(+). It functions in the pathway lipid metabolism; sphingolipid metabolism. Its function is as follows. Catalyzes the reduction of 3'-oxosphinganine (3-ketodihydrosphingosine/KDS) to sphinganine (dihydrosphingosine/DHS), the second step of de novo sphingolipid biosynthesis. In plants, sphingolipids seems to play a critical role in mineral ion homeostasis, most likely through their involvement in the ion transport functionalities of membrane systems in the root. Lacks stereospecificity and can also produce L-threo-DHS in addition to D-erythro-DHS. In Arabidopsis thaliana (Mouse-ear cress), this protein is 3-dehydrosphinganine reductase TSC10A (TSC10A).